A 172-amino-acid polypeptide reads, in one-letter code: Large ribosomal subunit protein uL10 (172 aa).

Belongs to the universal ribosomal protein uL10 family. In terms of assembly, part of the ribosomal stalk of the 50S ribosomal subunit. The N-terminus interacts with L11 and the large rRNA to form the base of the stalk. The C-terminus forms an elongated spine to which L12 dimers bind in a sequential fashion forming a multimeric L10(L12)X complex.

Its function is as follows. Forms part of the ribosomal stalk, playing a central role in the interaction of the ribosome with GTP-bound translation factors. This chain is Large ribosomal subunit protein uL10 (rplJ), found in Liberibacter asiaticus (Citrus greening disease).